Consider the following 327-residue polypeptide: Phenylalanine--tRNA ligase alpha subunit (327 aa).

Residue glutamate 252 coordinates Mg(2+).

It belongs to the class-II aminoacyl-tRNA synthetase family. Phe-tRNA synthetase alpha subunit type 1 subfamily. As to quaternary structure, tetramer of two alpha and two beta subunits. Mg(2+) is required as a cofactor.

The protein resides in the cytoplasm. The enzyme catalyses tRNA(Phe) + L-phenylalanine + ATP = L-phenylalanyl-tRNA(Phe) + AMP + diphosphate + H(+). The polypeptide is Phenylalanine--tRNA ligase alpha subunit (Yersinia enterocolitica serotype O:8 / biotype 1B (strain NCTC 13174 / 8081)).